Reading from the N-terminus, the 397-residue chain is Mannan endo-1,4-beta-mannosidase 1 (397 aa).

An N-terminal signal peptide occupies residues 1 to 23 (MSYARRSCICGLFLLFLALVCEA). 2 residues coordinate substrate: Trp83 and Asn198. Catalysis depends on Glu199, which acts as the Proton donor. Tyr276 is a binding site for substrate. Glu316 (nucleophile) is an active-site residue. Trp354 contacts substrate.

This sequence belongs to the glycosyl hydrolase 5 (cellulase A) family.

It localises to the secreted. It carries out the reaction Random hydrolysis of (1-&gt;4)-beta-D-mannosidic linkages in mannans, galactomannans and glucomannans.. The protein is Mannan endo-1,4-beta-mannosidase 1 (MAN1) of Solanum lycopersicum (Tomato).